The following is a 388-amino-acid chain: MNTSQLREKFKEVFGVEADHTFFSPGRINLIGEHTDYNGGNVLPVAITLGTYGAARKRDDKVLRFFSANFEEKGIIEVPLENLRFEKEHNWTNYPKGVLHFLQEAGHTIDSGMDIYIYGNIPNGSGLSSSSSLELLIGVIVEKLYDIKLERLDLVKIGKQTENDFIGVNSGIMDQFAIGMGADQCAIYLDTNTLKYDLVPLDLKDNVVVIMNTNKRRELADSKYNERRAECETAVSELQEKLDIQTLGELDFLTFDAYSYLIKDENRIKRARHVVLENQRTLQARKALETGDLEGFGRLMNASHVSLEYDYEVTGLELDTLAHTAWEQEGVLGARMTGAGFGGCAIALVNKDKVEDFKKAVGQRYEEVVGYAPSFYIAEVTGGSRVLD.

33-36 serves as a coordination point for substrate; it reads EHTD. ATP-binding positions include serine 67 and 124-130; that span reads GSGLSSS. Positions 130 and 162 each coordinate Mg(2+). The active-site Proton acceptor is aspartate 174. Tyrosine 224 serves as a coordination point for substrate.

It belongs to the GHMP kinase family. GalK subfamily.

It is found in the cytoplasm. It catalyses the reaction alpha-D-galactose + ATP = alpha-D-galactose 1-phosphate + ADP + H(+). It functions in the pathway carbohydrate metabolism; galactose metabolism. Catalyzes the transfer of the gamma-phosphate of ATP to D-galactose to form alpha-D-galactose-1-phosphate (Gal-1-P). This Streptococcus thermophilus protein is Galactokinase.